A 496-amino-acid chain; its full sequence is Probable cytosol aminopeptidase (496 aa).

Mn(2+) contacts are provided by Lys-266 and Asp-271. Lys-278 is a catalytic residue. Asp-289, Asp-348, and Glu-350 together coordinate Mn(2+). Arg-352 is an active-site residue.

It belongs to the peptidase M17 family. Requires Mn(2+) as cofactor.

It is found in the cytoplasm. It carries out the reaction Release of an N-terminal amino acid, Xaa-|-Yaa-, in which Xaa is preferably Leu, but may be other amino acids including Pro although not Arg or Lys, and Yaa may be Pro. Amino acid amides and methyl esters are also readily hydrolyzed, but rates on arylamides are exceedingly low.. The catalysed reaction is Release of an N-terminal amino acid, preferentially leucine, but not glutamic or aspartic acids.. In terms of biological role, presumably involved in the processing and regular turnover of intracellular proteins. Catalyzes the removal of unsubstituted N-terminal amino acids from various peptides. The polypeptide is Probable cytosol aminopeptidase (Pseudomonas fluorescens (strain Pf0-1)).